Here is a 427-residue protein sequence, read N- to C-terminus: tRNA(Ile)-lysidine synthase (427 aa).

25 to 30 (SGGLDS) contacts ATP.

The protein belongs to the tRNA(Ile)-lysidine synthase family.

The protein localises to the cytoplasm. The enzyme catalyses cytidine(34) in tRNA(Ile2) + L-lysine + ATP = lysidine(34) in tRNA(Ile2) + AMP + diphosphate + H(+). Ligates lysine onto the cytidine present at position 34 of the AUA codon-specific tRNA(Ile) that contains the anticodon CAU, in an ATP-dependent manner. Cytidine is converted to lysidine, thus changing the amino acid specificity of the tRNA from methionine to isoleucine. This chain is tRNA(Ile)-lysidine synthase, found in Histophilus somni (strain 129Pt) (Haemophilus somnus).